We begin with the raw amino-acid sequence, 432 residues long: Glucose-6-phosphate isomerase (432 aa).

Residue Glu283 is the Proton donor of the active site. Catalysis depends on residues His304 and Lys418.

The protein belongs to the GPI family.

It localises to the cytoplasm. The catalysed reaction is alpha-D-glucose 6-phosphate = beta-D-fructose 6-phosphate. It functions in the pathway carbohydrate biosynthesis; gluconeogenesis. The protein operates within carbohydrate degradation; glycolysis; D-glyceraldehyde 3-phosphate and glycerone phosphate from D-glucose: step 2/4. In terms of biological role, catalyzes the reversible isomerization of glucose-6-phosphate to fructose-6-phosphate. This is Glucose-6-phosphate isomerase from Rubrobacter xylanophilus (strain DSM 9941 / JCM 11954 / NBRC 16129 / PRD-1).